The following is a 441-amino-acid chain: Proline--tRNA ligase (441 aa).

Belongs to the class-II aminoacyl-tRNA synthetase family. ProS type 2 subfamily. Homodimer.

It localises to the cytoplasm. The catalysed reaction is tRNA(Pro) + L-proline + ATP = L-prolyl-tRNA(Pro) + AMP + diphosphate. Functionally, catalyzes the attachment of proline to tRNA(Pro) in a two-step reaction: proline is first activated by ATP to form Pro-AMP and then transferred to the acceptor end of tRNA(Pro). This chain is Proline--tRNA ligase, found in Afipia carboxidovorans (strain ATCC 49405 / DSM 1227 / KCTC 32145 / OM5) (Oligotropha carboxidovorans).